A 157-amino-acid chain; its full sequence is Putative pre-16S rRNA nuclease (157 aa).

The protein belongs to the YqgF nuclease family.

It is found in the cytoplasm. In terms of biological role, could be a nuclease involved in processing of the 5'-end of pre-16S rRNA. The polypeptide is Putative pre-16S rRNA nuclease (Anaplasma marginale (strain St. Maries)).